Reading from the N-terminus, the 397-residue chain is 2,3,4,5-tetrahydropyridine-2,6-dicarboxylate N-succinyltransferase (397 aa).

Residue E265 is the Acyl-anhydride intermediate of the active site. Residues R267, G282, S285, A308, 323–324, G331, K360, and 373–376 contribute to the succinyl-CoA site; these read DA and RQNS.

This sequence belongs to the type 2 tetrahydrodipicolinate N-succinyltransferase family. Homotrimer.

The protein resides in the cytoplasm. The enzyme catalyses (S)-2,3,4,5-tetrahydrodipicolinate + succinyl-CoA + H2O = (S)-2-succinylamino-6-oxoheptanedioate + CoA. The protein operates within amino-acid biosynthesis; L-lysine biosynthesis via DAP pathway; LL-2,6-diaminopimelate from (S)-tetrahydrodipicolinate (succinylase route): step 1/3. In terms of biological role, catalyzes the conversion of the cyclic tetrahydrodipicolinate (THDP) into the acyclic N-succinyl-L-2-amino-6-oxopimelate using succinyl-CoA. In Sulfurovum sp. (strain NBC37-1), this protein is 2,3,4,5-tetrahydropyridine-2,6-dicarboxylate N-succinyltransferase.